A 503-amino-acid polypeptide reads, in one-letter code: Probable cytosol aminopeptidase (503 aa).

The Mn(2+) site is built by Lys-271 and Asp-276. Lys-283 is a catalytic residue. Mn(2+) is bound by residues Asp-294, Asp-353, and Glu-355. Residue Arg-357 is part of the active site.

It belongs to the peptidase M17 family. Requires Mn(2+) as cofactor.

It localises to the cytoplasm. It catalyses the reaction Release of an N-terminal amino acid, Xaa-|-Yaa-, in which Xaa is preferably Leu, but may be other amino acids including Pro although not Arg or Lys, and Yaa may be Pro. Amino acid amides and methyl esters are also readily hydrolyzed, but rates on arylamides are exceedingly low.. It carries out the reaction Release of an N-terminal amino acid, preferentially leucine, but not glutamic or aspartic acids.. Its function is as follows. Presumably involved in the processing and regular turnover of intracellular proteins. Catalyzes the removal of unsubstituted N-terminal amino acids from various peptides. The protein is Probable cytosol aminopeptidase of Chlorobaculum parvum (strain DSM 263 / NCIMB 8327) (Chlorobium vibrioforme subsp. thiosulfatophilum).